A 271-amino-acid chain; its full sequence is Ribosomal RNA small subunit methyltransferase A (271 aa).

S-adenosyl-L-methionine contacts are provided by Asn-18, Leu-20, Gly-45, Glu-66, Asp-91, and Asn-112.

It belongs to the class I-like SAM-binding methyltransferase superfamily. rRNA adenine N(6)-methyltransferase family. RsmA subfamily.

It localises to the cytoplasm. The enzyme catalyses adenosine(1518)/adenosine(1519) in 16S rRNA + 4 S-adenosyl-L-methionine = N(6)-dimethyladenosine(1518)/N(6)-dimethyladenosine(1519) in 16S rRNA + 4 S-adenosyl-L-homocysteine + 4 H(+). In terms of biological role, specifically dimethylates two adjacent adenosines (A1518 and A1519) in the loop of a conserved hairpin near the 3'-end of 16S rRNA in the 30S particle. May play a critical role in biogenesis of 30S subunits. This chain is Ribosomal RNA small subunit methyltransferase A, found in Vibrio cholerae serotype O1 (strain ATCC 39315 / El Tor Inaba N16961).